A 132-amino-acid chain; its full sequence is Small ribosomal subunit protein bS6 (132 aa).

Residues 94-132 are disordered; sequence DAVTEESQLAKNADEKRARKATTRRPDRDDSDDNDHSED. Residues 122–132 are compositionally biased toward acidic residues; the sequence is DDSDDNDHSED.

This sequence belongs to the bacterial ribosomal protein bS6 family.

Its function is as follows. Binds together with bS18 to 16S ribosomal RNA. This is Small ribosomal subunit protein bS6 from Psychrobacter arcticus (strain DSM 17307 / VKM B-2377 / 273-4).